Here is a 289-residue protein sequence, read N- to C-terminus: NAD kinase (289 aa).

The active-site Proton acceptor is the D63. NAD(+) is bound by residues 63 to 64, R68, 138 to 139, R149, D168, 179 to 184, and Q238; these read DG, ND, and TGYSLS.

This sequence belongs to the NAD kinase family. It depends on a divalent metal cation as a cofactor.

It localises to the cytoplasm. The catalysed reaction is NAD(+) + ATP = ADP + NADP(+) + H(+). Functionally, involved in the regulation of the intracellular balance of NAD and NADP, and is a key enzyme in the biosynthesis of NADP. Catalyzes specifically the phosphorylation on 2'-hydroxyl of the adenosine moiety of NAD to yield NADP. This chain is NAD kinase, found in Gemmatimonas aurantiaca (strain DSM 14586 / JCM 11422 / NBRC 100505 / T-27).